Reading from the N-terminus, the 142-residue chain is Large ribosomal subunit protein uL11 (142 aa).

This sequence belongs to the universal ribosomal protein uL11 family. Part of the ribosomal stalk of the 50S ribosomal subunit. Interacts with L10 and the large rRNA to form the base of the stalk. L10 forms an elongated spine to which L12 dimers bind in a sequential fashion forming a multimeric L10(L12)X complex. Post-translationally, one or more lysine residues are methylated.

Functionally, forms part of the ribosomal stalk which helps the ribosome interact with GTP-bound translation factors. The sequence is that of Large ribosomal subunit protein uL11 from Pseudoalteromonas translucida (strain TAC 125).